We begin with the raw amino-acid sequence, 159 residues long: Eukaryotic translation initiation factor 5A (159 aa).

Positions Met1 to Ala12 are enriched in basic and acidic residues. The disordered stretch occupies residues Met1 to Gln23. A Hypusine modification is found at Lys52.

The protein belongs to the eIF-5A family. In terms of processing, lys-52 undergoes hypusination, a unique post-translational modification that consists in the addition of a butylamino group from spermidine to lysine side chain, leading to the formation of the unusual amino acid hypusine. eIF-5As are the only known proteins to undergo this modification, which is essential for their function.

Its function is as follows. Translation factor that promotes translation elongation and termination, particularly upon ribosome stalling at specific amino acid sequence contexts. Binds between the exit (E) and peptidyl (P) site of the ribosome and promotes rescue of stalled ribosome: specifically required for efficient translation of polyproline-containing peptides as well as other motifs that stall the ribosome. Acts as a ribosome quality control (RQC) cofactor by joining the RQC complex to facilitate peptidyl transfer during CAT tailing step. The chain is Eukaryotic translation initiation factor 5A (EIFSV1) from Senecio vernalis (Spring groundsel).